A 59-amino-acid polypeptide reads, in one-letter code: UPF0434 protein lpg1920 (59 aa).

It belongs to the UPF0434 family.

This is UPF0434 protein lpg1920 from Legionella pneumophila subsp. pneumophila (strain Philadelphia 1 / ATCC 33152 / DSM 7513).